A 284-amino-acid polypeptide reads, in one-letter code: Acetyl-coenzyme A carboxylase carboxyl transferase subunit beta (284 aa).

The CoA carboxyltransferase N-terminal domain maps to 25 to 284 (LWVKCPETGA…LCKILTKSVQ (260 aa)).

This sequence belongs to the AccD/PCCB family. Acetyl-CoA carboxylase is a heterohexamer composed of biotin carboxyl carrier protein (AccB), biotin carboxylase (AccC) and two subunits each of ACCase subunit alpha (AccA) and ACCase subunit beta (AccD).

The protein localises to the cytoplasm. It carries out the reaction N(6)-carboxybiotinyl-L-lysyl-[protein] + acetyl-CoA = N(6)-biotinyl-L-lysyl-[protein] + malonyl-CoA. The protein operates within lipid metabolism; malonyl-CoA biosynthesis; malonyl-CoA from acetyl-CoA: step 1/1. Component of the acetyl coenzyme A carboxylase (ACC) complex. Biotin carboxylase (BC) catalyzes the carboxylation of biotin on its carrier protein (BCCP) and then the CO(2) group is transferred by the transcarboxylase to acetyl-CoA to form malonyl-CoA. The sequence is that of Acetyl-coenzyme A carboxylase carboxyl transferase subunit beta from Liberibacter asiaticus (strain psy62).